The chain runs to 363 residues: GTPase Obg (363 aa).

Residues 1 to 159 form the Obg domain; that stretch reads MKFIDEAKIY…LELRLELRVL (159 aa). Positions 160–338 constitute an OBG-type G domain; that stretch reads ADVGLLGLPN…LIYAISEALE (179 aa). GTP contacts are provided by residues 166–173, 191–195, 213–216, 284–287, and 319–321; these read GLPNAGKS, FTTLH, DVPG, NKLD, and AAI. Residues S173 and T193 each contribute to the Mg(2+) site. A disordered region spans residues 342–363; that stretch reads RPEIGDLDDNDEDSDEIIRDTE. Positions 346–356 are enriched in acidic residues; it reads GDLDDNDEDSD.

This sequence belongs to the TRAFAC class OBG-HflX-like GTPase superfamily. OBG GTPase family. As to quaternary structure, monomer. Requires Mg(2+) as cofactor.

It localises to the cytoplasm. An essential GTPase which binds GTP, GDP and possibly (p)ppGpp with moderate affinity, with high nucleotide exchange rates and a fairly low GTP hydrolysis rate. Plays a role in control of the cell cycle, stress response, ribosome biogenesis and in those bacteria that undergo differentiation, in morphogenesis control. The chain is GTPase Obg from Dechloromonas aromatica (strain RCB).